Consider the following 710-residue polypeptide: TRP-like ion channel pkd2 (710 aa).

The signal sequence occupies residues 1–23; the sequence is MRLWRSPLLLLVVVVELFSWADA. Helical transmembrane passes span 173-193, 197-217, 322-342, 376-396, 404-424, 466-486, 492-512, 525-545, and 555-575; these read WVMC…SPVL, ALWE…IQAL, FFAT…LVAM, FFYR…MWEI, LAFL…YAFV, FFYF…FIGF, KVQG…MVIL, IGVA…CQAF, and IGII…LGIF. Phosphoserine is present on residues Ser-599 and Ser-632. The disordered stretch occupies residues 689 to 710; the sequence is RISENNNNAERRRKPLPNNAFR.

Belongs to the transient receptor potential (TRP) ion channel family. In terms of assembly, interacts with rho1.

Its subcellular location is the cell membrane. The protein resides in the golgi apparatus membrane. Its function is as follows. Acts as a key signaling component in the regulation of cell shape and cell wall synthesis through interaction with GTPase Rho1. This Schizosaccharomyces pombe (strain 972 / ATCC 24843) (Fission yeast) protein is TRP-like ion channel pkd2 (pkd2).